A 155-amino-acid chain; its full sequence is Ribosomal RNA large subunit methyltransferase H (155 aa).

Residues leucine 72, glycine 103, and leucine 122–leucine 127 each bind S-adenosyl-L-methionine.

It belongs to the RNA methyltransferase RlmH family. As to quaternary structure, homodimer.

It localises to the cytoplasm. The enzyme catalyses pseudouridine(1915) in 23S rRNA + S-adenosyl-L-methionine = N(3)-methylpseudouridine(1915) in 23S rRNA + S-adenosyl-L-homocysteine + H(+). Specifically methylates the pseudouridine at position 1915 (m3Psi1915) in 23S rRNA. In Histophilus somni (strain 2336) (Haemophilus somnus), this protein is Ribosomal RNA large subunit methyltransferase H.